Reading from the N-terminus, the 1047-residue chain is uncharacterized protein (1047 aa).

An N6-acetyllysine modification is found at lysine 17. Disordered stretches follow at residues 172 to 208 (PPCS…GSFS) and 236 to 283 (RNSK…PQAL). Serine 208 is subject to Phosphoserine. Residues 237 to 254 (NSKQAMSEGPSSPWTQLA) are compositionally biased toward polar residues. Over residues 268-283 (HYPPPHHPPPHPPQAL) the composition is skewed to pro residues. Serine 299 and serine 391 each carry phosphoserine. At threonine 397 the chain carries Phosphothreonine. 7 disordered regions span residues 448-469 (EKLQ…DSPV), 482-504 (ECQS…PVID), 519-567 (PAPE…LRGS), 668-690 (PSTP…GPIG), 714-763 (VAVA…GDSL), 931-1004 (EAGA…TLKA), and 1021-1047 (PTWG…SHHL). A phosphoserine mark is found at serine 455, serine 496, and serine 497. Low complexity-rich tracts occupy residues 729–741 (PARA…ARDP) and 751–762 (PAPASTSAPGDS). Phosphoserine is present on residues serine 936, serine 956, serine 988, and serine 996. Residues 978–996 (AAAGEESCGASPTPATSAS) are compositionally biased toward low complexity.

This is an uncharacterized protein from Homo sapiens (Human).